Reading from the N-terminus, the 530-residue chain is MLGTDRCVVEEWLSEFKALPDTQITSYAATLHRKKTLVPALYKVIQDSNNELLEPVCHQLFELYRSSEVRLKRFTLQFLPELMWVYLRLTVSRDRQSNGCIEALLLGIYNLEIADKDGNNKVLSFTIPSLSKPSIYHEPSTIGSMALTEGALCQHDLIRVVYSDLHPQRETFTAQNRFEVLSFLMLCYNSAIVYMPASSYQSLCRMGSRVCVSGFPRQHEKHWKELCGRIVLDPEFMVQLLTGVYYAMYNGQWDLGQEVLDDIIYRAQLELFSQPLLVANAMKNSLPFDAPDSTQEGQKVLKVEVTPTVPRISRTAITTASIRRHRWRREGAEGVNGGEESVNLNDADEGFSSGASLSSQPIGTKPSSSSQRGSLRKVATGRSAKDKETASAIKSSESPRDSVVRKQYVQQPTDLSVDSVELTPMKKHLSLPAGQVVPKINSLSLIRTASASSSKSFDYVNGSQASTSIGVGTEGGTNLAANNANRYSTVSLQEDRLGQAGEGKELLSPGAPLTKQSRSPSFNMQLISQV.

A phosphothreonine mark is found at threonine 30 and threonine 306. 2 positions are modified to phosphoserine: serine 321 and serine 341. The segment at 328 to 410 is disordered; sequence RREGAEGVNG…DSVVRKQYVQ (83 aa). Positions 353-373 are enriched in polar residues; it reads SGASLSSQPIGTKPSSSSQRG. Serine 430, serine 442, serine 444, and serine 491 each carry phosphoserine. Positions 502–530 are disordered; it reads EGKELLSPGAPLTKQSRSPSFNMQLISQV. Residues 514 to 530 are compositionally biased toward polar residues; that stretch reads TKQSRSPSFNMQLISQV.

This sequence belongs to the Hyccin family. In terms of assembly, component of a phosphatidylinositol 4-kinase (PI4K) complex, composed of PI4KA, EFR3 (EFR3A or EFR3B), TTC7 (TTC7A or TTC7B) and HYCC (HYCC1 or HYCC2).

The protein resides in the cytoplasm. The protein localises to the cytosol. It localises to the cell membrane. Functionally, component of a complex required to localize phosphatidylinositol 4-kinase (PI4K) to the plasma membrane. This is Hyccin 2 from Homo sapiens (Human).